Here is a 461-residue protein sequence, read N- to C-terminus: Ufm1-specific protease 2 (461 aa).

Active-site residues include Cys294, Asp418, and His420.

The protein belongs to the peptidase C78 family.

It localises to the endoplasmic reticulum. The protein localises to the cytoplasm. The protein resides in the nucleus. In terms of biological role, thiol-dependent isopeptidase that specifically cleaves UFM1, a ubiquitin-like modifier protein, from conjugated proteins, such as CD274/PD-L1, CYB5R3, DDRGK1, MRE11, RPL26/uL24, TRIP4 and RPL26/uL24. While it is also able to mediate the processing of UFM1 precursors, a prerequisite for conjugation reactions, UFSP2 mainly acts as a protein deUFMylase that mediates deconjugation of UFM1 from target proteins. Mediates deUFMylation of RPL26/uL24, a critical step to release the UFM1 ribosome E3 ligase (UREL) complex during the recycling of 60S ribosome subunits from the endoplasmic reticulum. Catalyzes deUFMylation of TRIP4, regulating intracellular nuclear receptors transactivation and thereby regulate cell proliferation and differentiation. This is Ufm1-specific protease 2 from Rattus norvegicus (Rat).